Consider the following 100-residue polypeptide: uncharacterized protein (100 aa).

Positions 1–26 (MKRLLVSLRVWMVFLMNWVTPDRKTA) are cleaved as a signal peptide.

This is an uncharacterized protein from Bacillus subtilis (strain 168).